The following is a 369-amino-acid chain: Histidine decarboxylase (369 aa).

H119 contacts substrate. K230 carries the N6-(pyridoxal phosphate)lysine modification.

Belongs to the group II decarboxylase family. Homotetramer. It depends on pyridoxal 5'-phosphate as a cofactor.

The catalysed reaction is L-histidine + H(+) = histamine + CO2. The protein is Histidine decarboxylase of Mesorhizobium japonicum (strain LMG 29417 / CECT 9101 / MAFF 303099) (Mesorhizobium loti (strain MAFF 303099)).